The sequence spans 583 residues: Phosphoglucomutase, cytoplasmic (583 aa).

Residues Met-1–Gly-20 form a disordered region. Residues Arg-25 and Ser-124 each coordinate alpha-D-glucose 1,6-bisphosphate. Ser-124 serves as the catalytic Phosphoserine intermediate. Mg(2+) is bound by residues Ser-124, Asp-300, Asp-302, and Asp-304. Phosphoserine is present on Ser-124. Residues Asp-304, Arg-305, Thr-368, Glu-387, Ser-389, and Lys-400 each contribute to the alpha-D-glucose 1,6-bisphosphate site.

Belongs to the phosphohexose mutase family. In terms of assembly, monomer. Mg(2+) is required as a cofactor.

The protein resides in the cytoplasm. The catalysed reaction is alpha-D-glucose 1-phosphate = alpha-D-glucose 6-phosphate. It carries out the reaction O-phospho-L-seryl-[protein] + alpha-D-glucose 1-phosphate = alpha-D-glucose 1,6-bisphosphate + L-seryl-[protein]. It catalyses the reaction alpha-D-glucose 1,6-bisphosphate + L-seryl-[protein] = O-phospho-L-seryl-[protein] + alpha-D-glucose 6-phosphate. Catalyzes the reversible isomerization of alpha-D-glucose 1-phosphate to alpha-D-glucose 6-phosphate. The mechanism proceeds via the intermediate compound alpha-D-glucose 1,6-bisphosphate. This enzyme participates in both the breakdown and synthesis of glucose. The polypeptide is Phosphoglucomutase, cytoplasmic (PGM1) (Mesembryanthemum crystallinum (Common ice plant)).